The chain runs to 148 residues: Large ribosomal subunit protein uL13 (148 aa).

Positions 128–148 are disordered; the sequence is PEHPHQAQNPQPFEINAKVEK.

This sequence belongs to the universal ribosomal protein uL13 family. In terms of assembly, part of the 50S ribosomal subunit.

This protein is one of the early assembly proteins of the 50S ribosomal subunit, although it is not seen to bind rRNA by itself. It is important during the early stages of 50S assembly. The protein is Large ribosomal subunit protein uL13 of Saccharopolyspora erythraea (strain ATCC 11635 / DSM 40517 / JCM 4748 / NBRC 13426 / NCIMB 8594 / NRRL 2338).